Reading from the N-terminus, the 755-residue chain is Xaa-Pro dipeptidyl-peptidase (755 aa).

Residues Ser-348, Asp-468, and His-498 each act as charge relay system in the active site.

It belongs to the peptidase S15 family. As to quaternary structure, homodimer.

It localises to the cytoplasm. The catalysed reaction is Hydrolyzes Xaa-Pro-|- bonds to release unblocked, N-terminal dipeptides from substrates including Ala-Pro-|-p-nitroanilide and (sequentially) Tyr-Pro-|-Phe-Pro-|-Gly-Pro-|-Ile.. Removes N-terminal dipeptides sequentially from polypeptides having unsubstituted N-termini provided that the penultimate residue is proline. The polypeptide is Xaa-Pro dipeptidyl-peptidase (Streptococcus thermophilus (strain CNRZ 1066)).